Consider the following 136-residue polypeptide: 5-hydroxyisourate hydrolase (136 aa).

Residues 1 to 22 form the signal peptide; the sequence is MKRHILATVIASLVAAPAMALA. Substrate is bound by residues H31, R69, and Y133.

It belongs to the transthyretin family. 5-hydroxyisourate hydrolase subfamily. As to quaternary structure, homotetramer.

The protein resides in the periplasm. The enzyme catalyses 5-hydroxyisourate + H2O = 5-hydroxy-2-oxo-4-ureido-2,5-dihydro-1H-imidazole-5-carboxylate + H(+). Functionally, catalyzes the hydrolysis of 5-hydroxyisourate (HIU) to 2-oxo-4-hydroxy-4-carboxy-5-ureidoimidazoline (OHCU). The polypeptide is 5-hydroxyisourate hydrolase (hiuH) (Salmonella dublin).